Consider the following 306-residue polypeptide: Phosphatidylserine decarboxylase proenzyme (306 aa).

Residues aspartate 98, histidine 155, and serine 259 each act as charge relay system; for autoendoproteolytic cleavage activity in the active site. Serine 259 (schiff-base intermediate with substrate; via pyruvic acid; for decarboxylase activity) is an active-site residue. Residue serine 259 is modified to Pyruvic acid (Ser); by autocatalysis.

This sequence belongs to the phosphatidylserine decarboxylase family. PSD-B subfamily. Prokaryotic type I sub-subfamily. As to quaternary structure, heterodimer of a large membrane-associated beta subunit and a small pyruvoyl-containing alpha subunit. It depends on pyruvate as a cofactor. In terms of processing, is synthesized initially as an inactive proenzyme. Formation of the active enzyme involves a self-maturation process in which the active site pyruvoyl group is generated from an internal serine residue via an autocatalytic post-translational modification. Two non-identical subunits are generated from the proenzyme in this reaction, and the pyruvate is formed at the N-terminus of the alpha chain, which is derived from the carboxyl end of the proenzyme. The autoendoproteolytic cleavage occurs by a canonical serine protease mechanism, in which the side chain hydroxyl group of the serine supplies its oxygen atom to form the C-terminus of the beta chain, while the remainder of the serine residue undergoes an oxidative deamination to produce ammonia and the pyruvoyl prosthetic group on the alpha chain. During this reaction, the Ser that is part of the protease active site of the proenzyme becomes the pyruvoyl prosthetic group, which constitutes an essential element of the active site of the mature decarboxylase.

It is found in the cell membrane. It carries out the reaction a 1,2-diacyl-sn-glycero-3-phospho-L-serine + H(+) = a 1,2-diacyl-sn-glycero-3-phosphoethanolamine + CO2. It participates in phospholipid metabolism; phosphatidylethanolamine biosynthesis; phosphatidylethanolamine from CDP-diacylglycerol: step 2/2. In terms of biological role, catalyzes the formation of phosphatidylethanolamine (PtdEtn) from phosphatidylserine (PtdSer). This Nitrosococcus oceani (strain ATCC 19707 / BCRC 17464 / JCM 30415 / NCIMB 11848 / C-107) protein is Phosphatidylserine decarboxylase proenzyme.